Reading from the N-terminus, the 311-residue chain is Homoserine kinase (311 aa).

Residue 88–98 (PEGLGLGSSGA) coordinates ATP.

This sequence belongs to the GHMP kinase family. Homoserine kinase subfamily.

The protein localises to the cytoplasm. It catalyses the reaction L-homoserine + ATP = O-phospho-L-homoserine + ADP + H(+). The protein operates within amino-acid biosynthesis; L-threonine biosynthesis; L-threonine from L-aspartate: step 4/5. Catalyzes the ATP-dependent phosphorylation of L-homoserine to L-homoserine phosphate. The protein is Homoserine kinase of Saccharolobus islandicus (strain Y.N.15.51 / Yellowstone #2) (Sulfolobus islandicus).